The sequence spans 137 residues: Proofreading thioesterase EntH (137 aa).

The active-site Nucleophile or proton acceptor is E63.

The protein belongs to the thioesterase PaaI family. As to quaternary structure, homotetramer. Dimer of dimers. Interacts specifically with the aryl carrier protein (ArCP) domain of EntB.

Its subcellular location is the cytoplasm. Its pathway is siderophore biosynthesis; enterobactin biosynthesis. Required for optimal enterobactin synthesis. Acts as a proofreading enzyme that prevents EntB misacylation by hydrolyzing the thioester bound existing between EntB and wrongly charged molecules. The chain is Proofreading thioesterase EntH from Escherichia coli O6:H1 (strain CFT073 / ATCC 700928 / UPEC).